The primary structure comprises 443 residues: Thymidine phosphorylase (443 aa).

The protein belongs to the thymidine/pyrimidine-nucleoside phosphorylase family. In terms of assembly, homodimer.

It catalyses the reaction thymidine + phosphate = 2-deoxy-alpha-D-ribose 1-phosphate + thymine. It participates in pyrimidine metabolism; dTMP biosynthesis via salvage pathway; dTMP from thymine: step 1/2. Its function is as follows. The enzymes which catalyze the reversible phosphorolysis of pyrimidine nucleosides are involved in the degradation of these compounds and in their utilization as carbon and energy sources, or in the rescue of pyrimidine bases for nucleotide synthesis. The chain is Thymidine phosphorylase from Shewanella baltica (strain OS155 / ATCC BAA-1091).